Consider the following 178-residue polypeptide: Transcription antitermination protein NusB (178 aa).

It belongs to the NusB family.

Functionally, involved in transcription antitermination. Required for transcription of ribosomal RNA (rRNA) genes. Binds specifically to the boxA antiterminator sequence of the ribosomal RNA (rrn) operons. The chain is Transcription antitermination protein NusB from Alkalilimnicola ehrlichii (strain ATCC BAA-1101 / DSM 17681 / MLHE-1).